The following is a 103-amino-acid chain: MQNQRIRIRLKGFDHRLIDQSTAEIVETAKRTGAQVRGPIPLPTRKERYTVLISPHVNKDARDQYEIRTHKRLVDIVEPTEKTVDALMRLDLAAGVDVQISLG.

It belongs to the universal ribosomal protein uS10 family. As to quaternary structure, part of the 30S ribosomal subunit.

Functionally, involved in the binding of tRNA to the ribosomes. The chain is Small ribosomal subunit protein uS10 from Shewanella frigidimarina (strain NCIMB 400).